We begin with the raw amino-acid sequence, 318 residues long: Methionyl-tRNA formyltransferase (318 aa).

110-113 (SLLP) is a (6S)-5,6,7,8-tetrahydrofolate binding site.

It belongs to the Fmt family.

It catalyses the reaction L-methionyl-tRNA(fMet) + (6R)-10-formyltetrahydrofolate = N-formyl-L-methionyl-tRNA(fMet) + (6S)-5,6,7,8-tetrahydrofolate + H(+). Functionally, attaches a formyl group to the free amino group of methionyl-tRNA(fMet). The formyl group appears to play a dual role in the initiator identity of N-formylmethionyl-tRNA by promoting its recognition by IF2 and preventing the misappropriation of this tRNA by the elongation apparatus. In Lacticaseibacillus casei (strain BL23) (Lactobacillus casei), this protein is Methionyl-tRNA formyltransferase.